We begin with the raw amino-acid sequence, 285 residues long: Methyl-CpG-binding domain protein 3 (285 aa).

Residues 1 to 69 (MERKRWECPA…STFDFRTGKM (69 aa)) enclose the MBD domain. Serine 56 is modified (phosphoserine). A Glycyl lysine isopeptide (Lys-Gly) (interchain with G-Cter in SUMO2) cross-link involves residue lysine 73. Serine 85 carries the post-translational modification Phosphoserine. Glycyl lysine isopeptide (Lys-Gly) (interchain with G-Cter in SUMO2) cross-links involve residues lysine 90 and lysine 92. Serine 144 carries the phosphoserine modification. The stretch at 221-279 (TDDDIRKQEELVQQVRKRLEEALMADMLAHVEELARDGEAPLDKACAEEEEEEEEEEEE) forms a coiled coil. The segment covering 255–267 (ARDGEAPLDKACA) has biased composition (basic and acidic residues). Positions 255–285 (ARDGEAPLDKACAEEEEEEEEEEEEPEPERV) are disordered. A compositionally biased stretch (acidic residues) spans 268–285 (EEEEEEEEEEEEPEPERV).

In terms of assembly, heterodimer (via N-terminus) with MBD2. Component of the MeCP1 histone deacetylase complex. Component of the nucleosome remodeling and deacetylase (NuRD) repressor complex, composed of core proteins MTA1, MTA2, MTA3, RBBP4, RBBP7, HDAC1, HDAC2, MBD2, MBD3, and peripherally associated proteins CDK2AP1, CDK2AP2, GATAD2A, GATAD2B, CHD3, CHD4 and CHD5. The exact stoichiometry of the NuRD complex is unknown, and some subunits such as MBD2 and MBD3, GATAD2A and GATAD2B, and CHD3, CHD4 and CHD5 define mutually exclusive NuRD complexes. Interacts with MBD3L2 (via N-terminus); the interaction is direct. Interacts with BCL6. Interacts with CDK2AP1. Interacts with HDAC1. Interacts with MTA2. Interacts with DNMT1. Interacts with GATAD2A. Interacts with GATAD2B. Does not interact with PWWP2A. Does not interact with PWWP2B. In terms of tissue distribution, highly expressed in brain, heart, kidney, liver, lung, skeletal muscle, spleen and testis. Detected at lower levels in embryonic stem cells.

The protein resides in the nucleus. It is found in the chromosome. Acts as a component of the histone deacetylase NuRD complex which participates in the remodeling of chromatin. Acts as transcriptional repressor and plays a role in gene silencing. Does not bind methylated DNA by itself. Binds to a lesser degree DNA containing unmethylated CpG dinucleotides. Recruits histone deacetylases and DNA methyltransferases. The sequence is that of Methyl-CpG-binding domain protein 3 (Mbd3) from Mus musculus (Mouse).